The primary structure comprises 330 residues: Quinone oxidoreductase (330 aa).

Ala-2 is modified (N-acetylalanine). An N6-acetyllysine modification is found at Lys-23. NADP(+) is bound by residues Tyr-53, 158 to 161, Gly-181, His-200, Asn-229, 246 to 249, and 269 to 271; these read SGGV, VGSK, and VTL. Position 248 is a phosphoserine (Ser-248).

It belongs to the zinc-containing alcohol dehydrogenase family. Quinone oxidoreductase subfamily. In terms of assembly, homotetramer.

The protein resides in the cytoplasm. The catalysed reaction is 2 a quinone + NADPH + H(+) = 2 a 1,4-benzosemiquinone + NADP(+). In terms of biological role, does not have alcohol dehydrogenase activity. Binds NADP and acts through a one-electron transfer process. Orthoquinones, such as 1,2-naphthoquinone or 9,10-phenanthrenequinone, are the best substrates (in vitro). May act in the detoxification of xenobiotics. Interacts with (AU)-rich elements (ARE) in the 3'-UTR of target mRNA species and enhances their stability. NADPH binding interferes with mRNA binding. The polypeptide is Quinone oxidoreductase (CRYZ) (Lama guanicoe (Guanaco)).